Here is a 561-residue protein sequence, read N- to C-terminus: Asparagine synthetase [glutamine-hydrolyzing] (561 aa).

Cys2 functions as the For GATase activity in the catalytic mechanism. The region spanning 2-191 is the Glutamine amidotransferase type-2 domain; it reads CGIWALFGSD…PGHYEVLDLK (190 aa). Residues 49–53, 75–77, and Asp97 each bind L-glutamine; these read RLAVV and NGE. Residues 213 to 536 form the Asparagine synthetase domain; the sequence is HALYDSVEKL…PGRADWLTHY (324 aa). ATP is bound by residues Leu256, Ile288, and 363–364; that span reads SG. Lys385 carries the post-translational modification N6-acetyllysine. Thr545 carries the phosphothreonine modification. The residue at position 557 (Ser557) is a Phosphoserine.

It catalyses the reaction L-aspartate + L-glutamine + ATP + H2O = L-asparagine + L-glutamate + AMP + diphosphate + H(+). The protein operates within amino-acid biosynthesis; L-asparagine biosynthesis; L-asparagine from L-aspartate (L-Gln route): step 1/1. The sequence is that of Asparagine synthetase [glutamine-hydrolyzing] (ASNS) from Cricetulus griseus (Chinese hamster).